The sequence spans 222 residues: MESVLNNEKAIVVFSGGQDSTTCLFYAKKHFKEVELVTFNYGQRHDTEIEVAKQIAQDQGMKHHVLDMSLLSQLTPNALTQHDMEITNNEDGIPNTFVPARNLLFLSFAGALAYQIGAKHIITGVCETDFSGYPDCRDSFIKSMNVTLSLAMDKDFVIHTPLMWLNKAETWKLSDELEVLDYIRTKTLTCYNGIIGDGCGECPACHLRQRGLNQYLESKGAL.

Position 14-24 (14-24 (FSGGQDSTTCL)) interacts with ATP. Zn(2+) contacts are provided by Cys-190, Cys-199, Cys-202, and Cys-205.

It belongs to the QueC family. Homodimer. The cofactor is Zn(2+).

The catalysed reaction is 7-carboxy-7-deazaguanine + NH4(+) + ATP = 7-cyano-7-deazaguanine + ADP + phosphate + H2O + H(+). The protein operates within purine metabolism; 7-cyano-7-deazaguanine biosynthesis. Its function is as follows. Catalyzes the ATP-dependent conversion of 7-carboxy-7-deazaguanine (CDG) to 7-cyano-7-deazaguanine (preQ(0)). The polypeptide is 7-cyano-7-deazaguanine synthase (Staphylococcus aureus (strain Mu3 / ATCC 700698)).